We begin with the raw amino-acid sequence, 267 residues long: Energy-coupling factor transporter transmembrane protein EcfT (267 aa).

The next 5 membrane-spanning stretches (helical) occupy residues 26–46 (IILTFIMMIFIFLINTYWGYL), 73–93 (ILFIVVFAGIINIFMIKGTVI), 116–136 (LFLLIITASLLTYTTTPIALT), 151–171 (VPVHEIAMMMTIALRFIPTLL), and 247–267 (LVTGITVVFMTWVILMEYVFF).

Belongs to the energy-coupling factor EcfT family. Forms a stable energy-coupling factor (ECF) transporter complex composed of 2 membrane-embedded substrate-binding proteins (S component), 2 ATP-binding proteins (A component) and 2 transmembrane proteins (T component). May be able to interact with more than 1 S component at a time.

Its subcellular location is the cell membrane. Its function is as follows. Transmembrane (T) component of an energy-coupling factor (ECF) ABC-transporter complex. Unlike classic ABC transporters this ECF transporter provides the energy necessary to transport a number of different substrates. In Ruminiclostridium cellulolyticum (strain ATCC 35319 / DSM 5812 / JCM 6584 / H10) (Clostridium cellulolyticum), this protein is Energy-coupling factor transporter transmembrane protein EcfT.